Reading from the N-terminus, the 356-residue chain is sn-glycerol-3-phosphate import ATP-binding protein UgpC (356 aa).

In terms of domain architecture, ABC transporter spans 4–235; that stretch reads LKLQAVTKSW…PASLFVASFI (232 aa). Residue 37–44 coordinates ATP; that stretch reads GPSGCGKS.

This sequence belongs to the ABC transporter superfamily. sn-glycerol-3-phosphate importer (TC 3.A.1.1.3) family. The complex is composed of two ATP-binding proteins (UgpC), two transmembrane proteins (UgpA and UgpE) and a solute-binding protein (UgpB).

It is found in the cell inner membrane. The enzyme catalyses sn-glycerol 3-phosphate(out) + ATP + H2O = sn-glycerol 3-phosphate(in) + ADP + phosphate + H(+). Part of the ABC transporter complex UgpBAEC involved in sn-glycerol-3-phosphate (G3P) import. Responsible for energy coupling to the transport system. This is sn-glycerol-3-phosphate import ATP-binding protein UgpC from Escherichia coli O157:H7.